Reading from the N-terminus, the 297-residue chain is 4-hydroxy-tetrahydrodipicolinate synthase (297 aa).

Thr55 serves as a coordination point for pyruvate. Tyr144 serves as the catalytic Proton donor/acceptor. The Schiff-base intermediate with substrate role is filled by Lys172. Residue Ile213 coordinates pyruvate.

Belongs to the DapA family. In terms of assembly, homotetramer; dimer of dimers.

It is found in the cytoplasm. The enzyme catalyses L-aspartate 4-semialdehyde + pyruvate = (2S,4S)-4-hydroxy-2,3,4,5-tetrahydrodipicolinate + H2O + H(+). It functions in the pathway amino-acid biosynthesis; L-lysine biosynthesis via DAP pathway; (S)-tetrahydrodipicolinate from L-aspartate: step 3/4. In terms of biological role, catalyzes the condensation of (S)-aspartate-beta-semialdehyde [(S)-ASA] and pyruvate to 4-hydroxy-tetrahydrodipicolinate (HTPA). This chain is 4-hydroxy-tetrahydrodipicolinate synthase, found in Lactococcus lactis subsp. cremoris (strain SK11).